The primary structure comprises 173 residues: Probable F-box protein At1g27490 (173 aa).

The 46-residue stretch at 1-46 (MEWSLPVDLQEEILSRVPAKSLARWKSTPKQWKGPISIEFLHLLRS) folds into the F-box domain.

This Arabidopsis thaliana (Mouse-ear cress) protein is Probable F-box protein At1g27490.